Here is a 621-residue protein sequence, read N- to C-terminus: MDSHTLIQALIYLGAAALIVPIASVLGLGSVLGYLIAGCIIGPWALRLVNDAEAILHFAEIGVVLMLVAMGLELDPQRLWKLRASVFDGGALQMVACGVLIGLFCMLLGLRWQVAELIGMTLALSSTAIAMQAMNERNLTVSQMGRSAFAVLLFQDIAAIPLVAMIPLLAASGGATSLMAFALSALKVAAALALVVVLGRYLTRPLLRFVARSGLREVFSAVACSWSSALGLLLEEVGLSMAMGAFLAGVLLASSEYRHALENDIEPVKGLLLGLFFIGVGMSIDFAPWSPNPLRIVILLVGFPAIKMLMLWLIAQPLGVPRAQHRWFAVLLGQGSEFAFVVFGPARMADVLDGEWPKALTLAVALSMATTPILLVLLTRLEKSSSGQARDADEIDEEQPRVIVAGFGRFGQIAGRLLLSSGVKMVILDHDPDHVDTLRKFDMKVFYGDATRVDLLESAGAEKAEVLINAIDDPHVSLELVARVKEHFPHLQIISRARDVDHYIQLRQAGVEAPERETFEAALKSGRMTLEALGLGAYEARERPDLFRRFNLQMVEEMVAMAENDPRRGVAVFKRTSDMLTGIINEDRHHLSLVQRHGWQGTEEGRHTGDIADEPENKPSA.

12 helical membrane-spanning segments follow: residues 9–29, 30–50, 54–74, 90–110, 114–134, 149–169, 178–198, 232–252, 270–290, 296–316, 326–346, and 359–379; these read ALIY…LGLG, SVLG…RLVN, AILH…GLEL, GALQ…LLGL, VAEL…MQAM, FAVL…IPLL, LMAF…VVVL, LLLE…GVLL, GLLL…APWS, IVIL…LIAQ, RWFA…FGPA, and ALTL…VLLT. In terms of domain architecture, RCK N-terminal spans 399 to 518; sequence QPRVIVAGFG…AGVEAPERET (120 aa). The disordered stretch occupies residues 598 to 621; that stretch reads GWQGTEEGRHTGDIADEPENKPSA.

It belongs to the monovalent cation:proton antiporter 2 (CPA2) transporter (TC 2.A.37) family. KefC subfamily. As to quaternary structure, homodimer. Interacts with the regulatory subunit KefF.

Its subcellular location is the cell inner membrane. Pore-forming subunit of a potassium efflux system that confers protection against electrophiles. Catalyzes K(+)/H(+) antiport. The sequence is that of Glutathione-regulated potassium-efflux system protein KefC from Klebsiella aerogenes (Enterobacter aerogenes).